The sequence spans 121 residues: Large ribosomal subunit protein bL12 (121 aa).

The protein belongs to the bacterial ribosomal protein bL12 family. As to quaternary structure, homodimer. Part of the ribosomal stalk of the 50S ribosomal subunit. Forms a multimeric L10(L12)X complex, where L10 forms an elongated spine to which 2 to 4 L12 dimers bind in a sequential fashion. Binds GTP-bound translation factors.

In terms of biological role, forms part of the ribosomal stalk which helps the ribosome interact with GTP-bound translation factors. Is thus essential for accurate translation. The polypeptide is Large ribosomal subunit protein bL12 (Streptococcus agalactiae serotype Ia (strain ATCC 27591 / A909 / CDC SS700)).